The following is an 89-amino-acid chain: Huwentoxin-IV (89 aa).

Residues 1–24 (MVNMKASMFLALAGLVLLFVVCYA) form the signal peptide. Residues 25–52 (SESEEKEFSNELLSSVLAVDDNSKGEER) constitute a propeptide that is removed on maturation. Glu53 is subject to Pyrrolidone carboxylic acid (Glu); partial. Cystine bridges form between Cys54-Cys69, Cys61-Cys76, and Cys68-Cys83. At Ile87 the chain carries Isoleucine amide.

Belongs to the neurotoxin 10 (Hwtx-1) family. 22 (Htx-4) subfamily. Two forms of huwentoxin-IV exist in the venom of H.schmidti, a non-N-terminally modified (HwTx-IV) and a naturally modified peptide with pyroglutamic acid residue at position 53 (mHwTx-IV). mHwTx-IV shows no observable difference with the unmodified toxin when applied to the TTX-S sodium channel of DRG neuron (IC(50)~50 nM) or when tested on hNav1.7/SCN9A (IC(50)=30.8 nM). In addition, similarly to the unmodified toxin, mHwTx-IV has only a weak affinity for lipid membranes. However, in contrast with HwTx-IV, which dissociates at moderate and high depolarization voltages (50-200 mV), mHwTx-IV inhibition of TTX-sensitive sodium channels is not reversed by strong depolarization voltages. Expressed by the venom gland.

It is found in the secreted. Functionally, this lethal neurotoxin (without cyclization at position 53) inhibits neuronal voltage-gated sodium channel Nav1.2/SCN2A (IC(50)=10-150 nM), rNav1.3/SCN3A (IC(50)=338 nM), Nav1.6/SCN8A (IC(50)=117 nM), and hNav1.7/SCN9A (IC(50)=9.6-33 nM). It inhibits activation of sodium channel by trapping the voltage sensor of domain II (DIIS4) in the closed configuration. The toxin neither shifts the Nav1.7/SCN9A activation curve nor modifies the slope factor. It does not slow fast-inactivation of hNav1.7/SCN9A channels. In addition, it has only a weak affinity for lipid membranes. This toxin also exists with a pyroglutamate at position 53. The sole difference observed between modified (mHwTx-IV) and unmodified toxins is that moderate or high depolarization voltages (200 mV) permit the unmodified toxin to dissociate, whereas mHwTx-IV toxin does not dissociate, even at high depolarization voltages. These data indicate that mHwTx-IV strongly binds to voltage sensor of sodium channel even at extreme depolarization voltages. In Cyriopagopus schmidti (Chinese bird spider), this protein is Huwentoxin-IV.